A 20-amino-acid polypeptide reads, in one-letter code: ATP synthase subunit beta, chloroplastic (20 aa).

A compositionally biased stretch (polar residues) spans 1–10 (METTNESLGY). Positions 1 to 20 (METTNESLGYTDQIIGPVLD) are disordered.

The protein belongs to the ATPase alpha/beta chains family. As to quaternary structure, F-type ATPases have 2 components, CF(1) - the catalytic core - and CF(0) - the membrane proton channel. CF(1) has five subunits: alpha(3), beta(3), gamma(1), delta(1), epsilon(1). CF(0) has four main subunits: a(1), b(1), b'(1) and c(9-12).

Its subcellular location is the plastid. The protein resides in the chloroplast thylakoid membrane. It carries out the reaction ATP + H2O + 4 H(+)(in) = ADP + phosphate + 5 H(+)(out). In terms of biological role, produces ATP from ADP in the presence of a proton gradient across the membrane. The catalytic sites are hosted primarily by the beta subunits. The polypeptide is ATP synthase subunit beta, chloroplastic (Chattonella marina var. antiqua (Red tide flagellate)).